Consider the following 338-residue polypeptide: Phosphate acyltransferase (338 aa).

The protein belongs to the PlsX family. As to quaternary structure, homodimer. Probably interacts with PlsY.

It is found in the cytoplasm. The enzyme catalyses a fatty acyl-[ACP] + phosphate = an acyl phosphate + holo-[ACP]. Its pathway is lipid metabolism; phospholipid metabolism. In terms of biological role, catalyzes the reversible formation of acyl-phosphate (acyl-PO(4)) from acyl-[acyl-carrier-protein] (acyl-ACP). This enzyme utilizes acyl-ACP as fatty acyl donor, but not acyl-CoA. The polypeptide is Phosphate acyltransferase (Endomicrobium trichonymphae).